The sequence spans 254 residues: 3-deoxy-manno-octulosonate cytidylyltransferase (254 aa).

The protein belongs to the KdsB family.

It is found in the cytoplasm. It catalyses the reaction 3-deoxy-alpha-D-manno-oct-2-ulosonate + CTP = CMP-3-deoxy-beta-D-manno-octulosonate + diphosphate. It participates in nucleotide-sugar biosynthesis; CMP-3-deoxy-D-manno-octulosonate biosynthesis; CMP-3-deoxy-D-manno-octulosonate from 3-deoxy-D-manno-octulosonate and CTP: step 1/1. Its pathway is bacterial outer membrane biogenesis; lipopolysaccharide biosynthesis. Functionally, activates KDO (a required 8-carbon sugar) for incorporation into bacterial lipopolysaccharide in Gram-negative bacteria. This chain is 3-deoxy-manno-octulosonate cytidylyltransferase, found in Bordetella parapertussis (strain 12822 / ATCC BAA-587 / NCTC 13253).